Reading from the N-terminus, the 360-residue chain is Ferredoxin--NADP reductase (360 aa).

Thr25, Glu44, Gln52, Tyr57, Val97, Phe132, Asp298, and Ser339 together coordinate FAD.

Belongs to the ferredoxin--NADP reductase type 2 family. Homodimer. Requires FAD as cofactor.

The enzyme catalyses 2 reduced [2Fe-2S]-[ferredoxin] + NADP(+) + H(+) = 2 oxidized [2Fe-2S]-[ferredoxin] + NADPH. This is Ferredoxin--NADP reductase from Chlorobaculum tepidum (strain ATCC 49652 / DSM 12025 / NBRC 103806 / TLS) (Chlorobium tepidum).